The sequence spans 593 residues: NADH-quinone oxidoreductase subunit C/D (593 aa).

An NADH dehydrogenase I subunit C region spans residues 1 to 184; the sequence is MTADNAIFIP…DPYSLTLAKQ (184 aa). Positions 208-593 are NADH dehydrogenase I subunit D; sequence DYMFLNLGPN…IDFVMADVDR (386 aa).

It in the N-terminal section; belongs to the complex I 30 kDa subunit family. This sequence in the C-terminal section; belongs to the complex I 49 kDa subunit family. As to quaternary structure, NDH-1 is composed of 13 different subunits. Subunits NuoB, CD, E, F, and G constitute the peripheral sector of the complex.

It localises to the cell inner membrane. It catalyses the reaction a quinone + NADH + 5 H(+)(in) = a quinol + NAD(+) + 4 H(+)(out). In terms of biological role, NDH-1 shuttles electrons from NADH, via FMN and iron-sulfur (Fe-S) centers, to quinones in the respiratory chain. The immediate electron acceptor for the enzyme in this species is believed to be ubiquinone. Couples the redox reaction to proton translocation (for every two electrons transferred, four hydrogen ions are translocated across the cytoplasmic membrane), and thus conserves the redox energy in a proton gradient. The protein is NADH-quinone oxidoreductase subunit C/D of Pseudomonas putida (strain ATCC 47054 / DSM 6125 / CFBP 8728 / NCIMB 11950 / KT2440).